The following is a 231-amino-acid chain: Cilia- and flagella-associated protein 299 (231 aa).

Its subcellular location is the cytoplasm. It localises to the nucleus. In terms of biological role, may be involved in spermatogenesis. This Bos taurus (Bovine) protein is Cilia- and flagella-associated protein 299.